Reading from the N-terminus, the 450-residue chain is tRNA modification GTPase MnmE (450 aa).

3 residues coordinate (6S)-5-formyl-5,6,7,8-tetrahydrofolate: arginine 23, glutamate 81, and lysine 120. In terms of domain architecture, TrmE-type G spans 216 to 373 (GIHLVLAGKP…LLKKIATLAG (158 aa)). GTP contacts are provided by residues 226 to 231 (NAGKSS), 245 to 251 (TPQAGTT), 270 to 273 (DTAG), and 337 to 340 (NKAD). Mg(2+)-binding residues include serine 230 and threonine 251. Lysine 450 lines the (6S)-5-formyl-5,6,7,8-tetrahydrofolate pocket.

It belongs to the TRAFAC class TrmE-Era-EngA-EngB-Septin-like GTPase superfamily. TrmE GTPase family. In terms of assembly, homodimer. Heterotetramer of two MnmE and two MnmG subunits. K(+) is required as a cofactor.

The protein resides in the cytoplasm. Functionally, exhibits a very high intrinsic GTPase hydrolysis rate. Involved in the addition of a carboxymethylaminomethyl (cmnm) group at the wobble position (U34) of certain tRNAs, forming tRNA-cmnm(5)s(2)U34. This is tRNA modification GTPase MnmE from Dichelobacter nodosus (strain VCS1703A).